Reading from the N-terminus, the 257-residue chain is Acyl-[acyl-carrier-protein]--UDP-N-acetylglucosamine O-acyltransferase (257 aa).

It belongs to the transferase hexapeptide repeat family. LpxA subfamily. As to quaternary structure, homotrimer.

It localises to the cytoplasm. It catalyses the reaction a (3R)-hydroxyacyl-[ACP] + UDP-N-acetyl-alpha-D-glucosamine = a UDP-3-O-[(3R)-3-hydroxyacyl]-N-acetyl-alpha-D-glucosamine + holo-[ACP]. It functions in the pathway glycolipid biosynthesis; lipid IV(A) biosynthesis; lipid IV(A) from (3R)-3-hydroxytetradecanoyl-[acyl-carrier-protein] and UDP-N-acetyl-alpha-D-glucosamine: step 1/6. Its function is as follows. Involved in the biosynthesis of lipid A, a phosphorylated glycolipid that anchors the lipopolysaccharide to the outer membrane of the cell. This is Acyl-[acyl-carrier-protein]--UDP-N-acetylglucosamine O-acyltransferase from Fusobacterium nucleatum subsp. nucleatum (strain ATCC 25586 / DSM 15643 / BCRC 10681 / CIP 101130 / JCM 8532 / KCTC 2640 / LMG 13131 / VPI 4355).